Here is a 296-residue protein sequence, read N- to C-terminus: Acetylglutamate kinase (296 aa).

Substrate is bound by residues 65-66 (GG), Arg87, and Asn190.

Belongs to the acetylglutamate kinase family. ArgB subfamily.

The protein localises to the cytoplasm. It catalyses the reaction N-acetyl-L-glutamate + ATP = N-acetyl-L-glutamyl 5-phosphate + ADP. It participates in amino-acid biosynthesis; L-arginine biosynthesis; N(2)-acetyl-L-ornithine from L-glutamate: step 2/4. Its function is as follows. Catalyzes the ATP-dependent phosphorylation of N-acetyl-L-glutamate. The chain is Acetylglutamate kinase from Moorella thermoacetica (strain ATCC 39073 / JCM 9320).